Reading from the N-terminus, the 211-residue chain is Ribonuclease HII (211 aa).

Residues 17-211 enclose the RNase H type-2 domain; that stretch reads FLSAGVDEVG…CQPSLFEVRS (195 aa). Positions 23, 24, and 119 each coordinate a divalent metal cation.

This sequence belongs to the RNase HII family. Mn(2+) is required as a cofactor. It depends on Mg(2+) as a cofactor.

The protein localises to the cytoplasm. It carries out the reaction Endonucleolytic cleavage to 5'-phosphomonoester.. Functionally, endonuclease that specifically degrades the RNA of RNA-DNA hybrids. In Trichodesmium erythraeum (strain IMS101), this protein is Ribonuclease HII.